A 207-amino-acid chain; its full sequence is UPF0126 inner membrane protein YadS (207 aa).

A helical transmembrane segment spans residues 1-21 (MLVYWLDIVGTAVFAISGVLL). Residues 22–29 (AGKLRMDP) lie on the Cytoplasmic side of the membrane. Residues 30-50 (FGVLVLGVVTAVGGGTIRDMA) traverse the membrane as a helical segment. Residues 51 to 58 (LDHGPVFW) lie on the Periplasmic side of the membrane. Residues 59-79 (VKDPTDLVVAMVTSMLTIVLV) traverse the membrane as a helical segment. Residues 80-85 (RQPRRL) lie on the Cytoplasmic side of the membrane. Residues 86-106 (PKWMLPVLDAVGLAVFVGIGV) form a helical membrane-spanning segment. Residues 107–112 (NKAFNA) are Periplasmic-facing. A helical membrane pass occupies residues 113–133 (EAGPLIAVCMGVITGVGGGII). Topologically, residues 134–148 (RDVLAREIPMILRTE) are cytoplasmic. Residues 149-169 (IYATACIIGGIVHATAYYTFS) form a helical membrane-spanning segment. Residue V170 is a topological domain, periplasmic. A helical membrane pass occupies residues 171-191 (PLETASMMGMVVTLLIRLAAI). Residues 192–207 (RWHLKLPTFALDENGR) lie on the Cytoplasmic side of the membrane.

This sequence belongs to the UPF0126 family.

The protein resides in the cell inner membrane. The sequence is that of UPF0126 inner membrane protein YadS (yadS) from Escherichia coli O6:H1 (strain CFT073 / ATCC 700928 / UPEC).